The sequence spans 477 residues: Probable cytosol aminopeptidase (477 aa).

Positions 245 and 250 each coordinate Mn(2+). Lys-257 is a catalytic residue. Mn(2+) is bound by residues Asp-268, Asp-327, and Glu-329. Residue Arg-331 is part of the active site.

It belongs to the peptidase M17 family. It depends on Mn(2+) as a cofactor.

The protein resides in the cytoplasm. It carries out the reaction Release of an N-terminal amino acid, Xaa-|-Yaa-, in which Xaa is preferably Leu, but may be other amino acids including Pro although not Arg or Lys, and Yaa may be Pro. Amino acid amides and methyl esters are also readily hydrolyzed, but rates on arylamides are exceedingly low.. It catalyses the reaction Release of an N-terminal amino acid, preferentially leucine, but not glutamic or aspartic acids.. Its function is as follows. Presumably involved in the processing and regular turnover of intracellular proteins. Catalyzes the removal of unsubstituted N-terminal amino acids from various peptides. The protein is Probable cytosol aminopeptidase of Exiguobacterium sibiricum (strain DSM 17290 / CCUG 55495 / CIP 109462 / JCM 13490 / 255-15).